The chain runs to 608 residues: Bifunctional dihydrofolate reductase-thymidylate synthase (608 aa).

The DHFR domain occupies 10–228 (DIYAICACCK…TTLDFIIYKK (219 aa)). 14–15 (IC) is a substrate binding site. Position 16 (A16) interacts with NADP(+). V31 is a substrate binding site. NADP(+) is bound at residue 39 to 45 (GLGNKGV). The substrate site is built by D54 and N108. NADP(+) contacts are provided by residues 106–108 (RTN), 128–130 (SRT), and N144. Positions 164, 170, and 185 each coordinate substrate. 165-172 (GGSVVYQE) is an NADP(+) binding site. The thymidylate synthase stretch occupies residues 322-608 (YHPEYQYLNI…HEKISMDMAA (287 aa)). Residue R345 participates in dUMP binding. C490 is a catalytic residue. DUMP contacts are provided by residues H491, 509 to 513 (QRSCD), N521, and 551 to 553 (HVY).

It in the N-terminal section; belongs to the dihydrofolate reductase family. In the C-terminal section; belongs to the thymidylate synthase family. In terms of assembly, homodimer.

It carries out the reaction (6S)-5,6,7,8-tetrahydrofolate + NADP(+) = 7,8-dihydrofolate + NADPH + H(+). It catalyses the reaction dUMP + (6R)-5,10-methylene-5,6,7,8-tetrahydrofolate = 7,8-dihydrofolate + dTMP. The protein operates within cofactor biosynthesis; tetrahydrofolate biosynthesis; 5,6,7,8-tetrahydrofolate from 7,8-dihydrofolate: step 1/1. Functionally, bifunctional enzyme. Involved in de novo dTMP biosynthesis. Key enzyme in folate metabolism. Catalyzes an essential reaction for de novo glycine and purine synthesis, DNA precursor synthesis, and for the conversion of dUMP to dTMP. The protein is Bifunctional dihydrofolate reductase-thymidylate synthase of Plasmodium falciparum (isolate K1 / Thailand).